The following is a 618-amino-acid chain: Protease 4 (618 aa).

Residues Met1–Glu24 lie on the Cytoplasmic side of the membrane. A helical membrane pass occupies residues Met25–Ile45. Residues Gly46–Arg618 are Periplasmic-facing. The active-site Proton donor/acceptor is the Lys209. The active-site Nucleophile is the Ser409.

Belongs to the peptidase S49 family. Homotetramer.

Its subcellular location is the cell inner membrane. Functionally, digests cleaved signal peptides in vitro, its in vivo function is unknown. This activity is necessary to maintain proper secretion of mature proteins across the membrane. The polypeptide is Protease 4 (sppA) (Salmonella typhi).